The following is a 29-amino-acid chain: Trypsin inhibitor 4 (29 aa).

3 disulfide bridges follow: Cys-3-Cys-20, Cys-10-Cys-22, and Cys-16-Cys-28.

The protein belongs to the protease inhibitor I7 (squash-type serine protease inhibitor) family.

Its subcellular location is the secreted. Its function is as follows. Strongly inhibits trypsin, weakly inhibits chymotrypsin. In Cyclanthera pedata (Achocha), this protein is Trypsin inhibitor 4.